Here is a 361-residue protein sequence, read N- to C-terminus: Cyclin-Y-like protein 2 (361 aa).

One can recognise a Cyclin N-terminal domain in the interval 204-286; sequence MRLTAEFAIV…QFLKLINYNN (83 aa).

This sequence belongs to the cyclin family. Cyclin Y subfamily.

The chain is Cyclin-Y-like protein 2 (CCNYL2) from Homo sapiens (Human).